Here is a 223-residue protein sequence, read N- to C-terminus: Probable GTP-binding protein EngB (223 aa).

Positions 49-223 (MGVEIAFAGR…LRAALAGLTD (175 aa)) constitute an EngB-type G domain. GTP is bound by residues 57-64 (GRSNVGKS), 84-88 (GRTKQ), 102-105 (DMPG), 169-172 (TKAD), and 203-205 (TSS). Mg(2+) is bound by residues S64 and T86.

This sequence belongs to the TRAFAC class TrmE-Era-EngA-EngB-Septin-like GTPase superfamily. EngB GTPase family. Mg(2+) serves as cofactor.

Functionally, necessary for normal cell division and for the maintenance of normal septation. In Granulibacter bethesdensis (strain ATCC BAA-1260 / CGDNIH1), this protein is Probable GTP-binding protein EngB.